We begin with the raw amino-acid sequence, 346 residues long: N-acetyl-gamma-glutamyl-phosphate reductase (346 aa).

The active site involves cysteine 149.

Belongs to the NAGSA dehydrogenase family. Type 1 subfamily.

It localises to the cytoplasm. The catalysed reaction is N-acetyl-L-glutamate 5-semialdehyde + phosphate + NADP(+) = N-acetyl-L-glutamyl 5-phosphate + NADPH + H(+). Its pathway is amino-acid biosynthesis; L-arginine biosynthesis; N(2)-acetyl-L-ornithine from L-glutamate: step 3/4. In terms of biological role, catalyzes the NADPH-dependent reduction of N-acetyl-5-glutamyl phosphate to yield N-acetyl-L-glutamate 5-semialdehyde. In Pelobacter propionicus (strain DSM 2379 / NBRC 103807 / OttBd1), this protein is N-acetyl-gamma-glutamyl-phosphate reductase.